The following is a 193-amino-acid chain: DNA damage-inducible transcript 4-like protein (193 aa).

This sequence belongs to the DDIT4 family.

The protein resides in the cytoplasm. Inhibits cell growth by regulating the TOR signaling pathway upstream of the TSC1-TSC2 complex and downstream of AKT1. The protein is DNA damage-inducible transcript 4-like protein (Ddit4l) of Mus musculus (Mouse).